Here is a 94-residue protein sequence, read N- to C-terminus: Co-chaperonin GroES (94 aa).

This sequence belongs to the GroES chaperonin family. As to quaternary structure, heptamer of 7 subunits arranged in a ring. Interacts with the chaperonin GroEL.

It is found in the cytoplasm. Its function is as follows. Together with the chaperonin GroEL, plays an essential role in assisting protein folding. The GroEL-GroES system forms a nano-cage that allows encapsulation of the non-native substrate proteins and provides a physical environment optimized to promote and accelerate protein folding. GroES binds to the apical surface of the GroEL ring, thereby capping the opening of the GroEL channel. The chain is Co-chaperonin GroES from Listeria welshimeri serovar 6b (strain ATCC 35897 / DSM 20650 / CCUG 15529 / CIP 8149 / NCTC 11857 / SLCC 5334 / V8).